Reading from the N-terminus, the 138-residue chain is Small ribosomal subunit protein uS11c (138 aa).

The tract at residues 1-22 is disordered; the sequence is MAKPILRVGSRKNTRSASRKNV. A compositionally biased stretch (basic residues) spans 9–22; that stretch reads GSRKNTRSASRKNV.

It belongs to the universal ribosomal protein uS11 family. In terms of assembly, part of the 30S ribosomal subunit.

The protein resides in the plastid. It localises to the chloroplast. This is Small ribosomal subunit protein uS11c from Draba nemorosa (Woodland whitlowgrass).